Reading from the N-terminus, the 139-residue chain is MAGARGCVVLLAAALMLVGAVLGSEDRSRLLGAPVPVDENDEGLQRALQFAMAEYNRASNDKYSSRVVRVISAKRQLVSGIKYILQVEIGRTTCPKSSGDLQSCEFHDEPEMAKYTTCTFVVYSIPWLNQIKLLESKCQ.

The N-terminal stretch at 1 to 23 (MAGARGCVVLLAAALMLVGAVLG) is a signal peptide. The short motif at 76 to 80 (QLVSG) is the Secondary area of contact element. 2 disulfides stabilise this stretch: cysteine 94–cysteine 104 and cysteine 118–cysteine 138. The residue at position 103 (serine 103) is a Phosphoserine.

This sequence belongs to the cystatin family.

Its subcellular location is the secreted. Functionally, this protein binds tightly to and inhibits a variety of thiol proteases including ficin, papain, and cathepsins B, C, H, and L. Although isolated from egg white, it is also present in serum. In Gallus gallus (Chicken), this protein is Cystatin.